We begin with the raw amino-acid sequence, 340 residues long: PI-PLC X domain-containing protein 2 (340 aa).

Residues 42–215 (HLHNVPLSNL…KYQVLIFYHC (174 aa)) form the PI-PLC X-box domain. Residues His-57 and His-132 contribute to the active site.

In terms of tissue distribution, expressed at highest levels in brain, followed by stomach and small intestine. Detected at low levels in kidney, ey, thymus and slkeletal muscle.

It is found in the nucleus. It carries out the reaction a 1,2-diacyl-sn-glycero-3-phospho-(1D-myo-inositol) + H2O = 1D-myo-inositol 1-phosphate + a 1,2-diacyl-sn-glycerol + H(+). Its function is as follows. Catalyzes the hydrolysis of inositol from phosphatidylinositol (1,2-diacyl-sn-glycero-3-phospho-(1D-myo-inositol), PI). Could also hydrolyze various multi-phosphorylated derivatives of PI, such as phosphatidylinositol-4,5 bisphosphate (PIP2), releasing inositol-1,4,5-trisphosphate (IP3) and the protein kinase C activator diacylglycerol (DAG), therefore mediating cell signaling. The sequence is that of PI-PLC X domain-containing protein 2 (Plcxd2) from Mus musculus (Mouse).